Consider the following 347-residue polypeptide: Tsukushi (347 aa).

Residues 1-19 (MASLLCLFFSLLGLAAIGA) form the signal peptide. Residues 20-61 (VKNCHPQCRCEVETFGLFDSFSLTKVDCSRIGPGNTPVPIPL) form the LRRNT domain. LRR repeat units lie at residues 62 to 83 (DTSHLDLSLNSTTSISDTMLSG), 88 to 109 (TLVSLDLSSNLIAQISPKAFSK), 112 to 133 (YLETLDLSSNALEGLSDGCFTG), 135 to 156 (PLVELDLSENQFKEFNLDLFTT), 160 to 175 (DLPIMVDLSRNLLTSI), 185 to 205 (YIKSLMLAGNQLKTVPKLNGI), 206 to 227 (PLQYLNLDGNLISSIDTGAFDS), 230 to 252 (ELVHLSLSGLSELTLIHPGAFRS), 255 to 277 (NLQALDLSNNSQLKTLNPNVFSG), and 280 to 301 (SLQELNLSNTAVTPLSRTVFMQ). Asn285 is a glycosylation site (N-linked (GlcNAc...) asparagine).

In terms of assembly, forms a ternary complex with chordin/CHRD and BMP4.

It localises to the secreted. Functionally, contributes to various developmental events through its interactions with multiple signaling pathways. Dorsalizing factor which functions as an inhibitor of bone morphogenetic proteins during gastrulation. The polypeptide is Tsukushi (tsku) (Danio rerio (Zebrafish)).